A 625-amino-acid chain; its full sequence is Probable receptor-like protein kinase At1g11050 (625 aa).

The first 20 residues, 1-20 (MPNSILFLLLSFLYLTNCVA), serve as a signal peptide directing secretion. The Extracellular portion of the chain corresponds to 21–227 (QSPSQTCPLD…PLNSKKKRHT (207 aa)). N-linked (GlcNAc...) asparagine glycosylation is found at N40, N106, N121, and N177. Residues 228 to 248 (VALALGITGAIFGALVIAGLI) traverse the membrane as a helical segment. The Cytoplasmic portion of the chain corresponds to 249–625 (CLYFRFGKAV…LQIHSGDMLR (377 aa)). The 261-residue stretch at 295-555 (FSQKNFIGRG…NPKGIMERFL (261 aa)) folds into the Protein kinase domain. Residues 301–309 (IGRGGFGFV) and K323 each bind ATP. D426 serves as the catalytic Proton acceptor.

It belongs to the protein kinase superfamily. Ser/Thr protein kinase family.

The protein resides in the membrane. The catalysed reaction is L-seryl-[protein] + ATP = O-phospho-L-seryl-[protein] + ADP + H(+). It catalyses the reaction L-threonyl-[protein] + ATP = O-phospho-L-threonyl-[protein] + ADP + H(+). The sequence is that of Probable receptor-like protein kinase At1g11050 from Arabidopsis thaliana (Mouse-ear cress).